We begin with the raw amino-acid sequence, 166 residues long: Urease accessory protein UreE (166 aa).

The protein belongs to the UreE family.

It localises to the cytoplasm. Its function is as follows. Involved in urease metallocenter assembly. Binds nickel. Probably functions as a nickel donor during metallocenter assembly. This Pseudomonas savastanoi pv. phaseolicola (strain 1448A / Race 6) (Pseudomonas syringae pv. phaseolicola (strain 1448A / Race 6)) protein is Urease accessory protein UreE.